Here is a 585-residue protein sequence, read N- to C-terminus: Arginine--tRNA ligase (585 aa).

A 'HIGH' region motif is present at residues 131–141 (ANPTGPMHVGH).

It belongs to the class-I aminoacyl-tRNA synthetase family. Monomer.

Its subcellular location is the cytoplasm. It carries out the reaction tRNA(Arg) + L-arginine + ATP = L-arginyl-tRNA(Arg) + AMP + diphosphate. The protein is Arginine--tRNA ligase of Brucella abortus (strain S19).